A 950-amino-acid polypeptide reads, in one-letter code: Nonsense-mediated mRNA decay factor SMG8 (950 aa).

Disordered stretches follow at residues 560–607 and 624–651; these read HTGK…LSPT and NESQ…ADTE. Residues 568–582 are compositionally biased toward acidic residues; that stretch reads QDEDGEEDAEDEEGQ. Over residues 593-607 the composition is skewed to polar residues; sequence QNTASNGCSQPLSPT. Residues 624–648 show a composition bias toward low complexity; it reads NESQASSEQLSNSEQNSTSSGTSSA.

It belongs to the SMG8 family.

Functionally, involved in nonsense-mediated decay (NMD) of mRNAs containing premature stop codons. Probable component of kinase complex containing nonC and recruited to stalled ribosomes. The chain is Nonsense-mediated mRNA decay factor SMG8 from Drosophila yakuba (Fruit fly).